The sequence spans 419 residues: Enolase (419 aa).

Glutamine 161 provides a ligand contact to (2R)-2-phosphoglycerate. The active-site Proton donor is glutamate 205. Mg(2+)-binding residues include aspartate 240, glutamate 283, and aspartate 309. 4 residues coordinate (2R)-2-phosphoglycerate: lysine 334, arginine 363, serine 364, and lysine 385. Lysine 334 serves as the catalytic Proton acceptor.

This sequence belongs to the enolase family. Mg(2+) serves as cofactor.

It is found in the cytoplasm. The protein resides in the secreted. The protein localises to the cell surface. It catalyses the reaction (2R)-2-phosphoglycerate = phosphoenolpyruvate + H2O. The protein operates within carbohydrate degradation; glycolysis; pyruvate from D-glyceraldehyde 3-phosphate: step 4/5. Catalyzes the reversible conversion of 2-phosphoglycerate (2-PG) into phosphoenolpyruvate (PEP). It is essential for the degradation of carbohydrates via glycolysis. The sequence is that of Enolase from Saccharolobus islandicus (strain Y.N.15.51 / Yellowstone #2) (Sulfolobus islandicus).